The chain runs to 362 residues: MLKRTPLFDLYKEYGGKTIDFGGWELPVQFSSIKKEHEAVRTAAGLFDVSHMGEVEVSGNDSLSFLQRLMTNDVSALTPGRAQYTAMCYPDGGTVDDLLIYQKGENRYLLVINASNIDKDLAWMKEHAAGDVQIDNQSDQIALLAVQGPKAEAILKNLTDADVSALKPFAFIDEADISGRKALISRTGYTGEDGYEIYCRSDDAMHIWKKIIDAGDAYGLIPCGLGARDTLRFEAKLPLYGQELTRDITPIEAGIGFAVKHKKESDFFGKSVLSEQKENGAKRKLVGLEMIEKGIPRHGYEVFQNGKSVGKVTTGTQSPTLGKNVGLALIDSETSEIGTVVDVEIRKKLVKAKVVKTPFYKR.

This sequence belongs to the GcvT family. In terms of assembly, the glycine cleavage system is composed of four proteins: P, T, L and H.

It carries out the reaction N(6)-[(R)-S(8)-aminomethyldihydrolipoyl]-L-lysyl-[protein] + (6S)-5,6,7,8-tetrahydrofolate = N(6)-[(R)-dihydrolipoyl]-L-lysyl-[protein] + (6R)-5,10-methylene-5,6,7,8-tetrahydrofolate + NH4(+). Functionally, the glycine cleavage system catalyzes the degradation of glycine. The polypeptide is Aminomethyltransferase (Bacillus subtilis (strain 168)).